A 388-amino-acid polypeptide reads, in one-letter code: Probable proton-coupled zinc antiporter SLC30A3 (388 aa).

The tract at residues 1 to 41 (MEPSLATGGSETTRLVSARDRSSAGGGLRLKSLFTEPSEPL) is disordered. At 1–75 (MEPSLATGGS…SPERVQARRQ (75 aa)) the chain is on the cytoplasmic side. Residues Ser63 and Ser66 each carry the phosphoserine modification. Residues 76 to 96 (LYAACAVCFIFMAGEVVGGYL) traverse the membrane as a helical segment. At 97 to 105 (AHSLAIMTD) the chain is on the lumenal side. A helical membrane pass occupies residues 106-126 (AAHLLADIGSMLASLFSLWLS). Zn(2+) contacts are provided by His108 and Asp112. Topologically, residues 127–145 (TRPATRTMTFGWHRSETLG) are cytoplasmic. A helical membrane pass occupies residues 146–166 (ALASVVSLWIVTGILLYLAFL). Over 167-177 (RLLHSDYHIEA) the chain is Lumenal. A helical membrane pass occupies residues 178–198 (GAMLLTASIAVCANLLMAFVL). At 199–235 (HQTGAPHSHGSTGAEYAPLEEGHGYPMSLGNTSVRAA) the chain is on the cytoplasmic side. A helical membrane pass occupies residues 236–256 (FVHVLGDLLQSFGVLAASILI). Positions 238 and 242 each coordinate Zn(2+). At 257–263 (YFKPQYK) the chain is on the lumenal side. A helical membrane pass occupies residues 264 to 284 (VADPISTFLFSICALGSTAPT). Over 285 to 388 (LRDVLLVLME…CLRCQEPSQA (104 aa)) the chain is Cytoplasmic.

This sequence belongs to the cation diffusion facilitator (CDF) transporter (TC 2.A.4) family. SLC30A subfamily. As to quaternary structure, homodimer. Homodimerization is negligible compared to the human protein. It could explain the lower efficiency of zinc transport. Interacts with TMEM163. Expression is restricted to brain (at protein level). In the brain, most abundant in hippocampus and cerebral cortex. The mRNA is also detected in testis, expression being restricted to germ cells and highest in pachytene spermatocytes and round spermatids.

The protein localises to the cytoplasmic vesicle. It localises to the secretory vesicle. The protein resides in the synaptic vesicle membrane. It is found in the synapse. Its subcellular location is the synaptosome. The protein localises to the late endosome membrane. It localises to the lysosome membrane. The catalysed reaction is Zn(2+)(in) + 2 H(+)(out) = Zn(2+)(out) + 2 H(+)(in). Functionally, probable proton-coupled zinc ion antiporter mediating the import of zinc from cytoplasm into synaptic vesicles and participating to cellular zinc ion homeostasis in the brain. In Mus musculus (Mouse), this protein is Probable proton-coupled zinc antiporter SLC30A3.